The following is a 428-amino-acid chain: MRAILILLDGLGDRASEILNNKTPLQFAKTPNLDRLAENGMCGLMTTYKEGIPLGTEVAHFLLWGYSLEEFPGRGVIEALGEDIEIEKNAIYLRASLGFVKKDEKGFLVIDRRTKDISREEIEKLVDSLPTCVDGYKFELFYSFDVHFILKIKERNGWISDKISDSDPFYKNRYVMKVKAIRELCKSEVEYSKAKDTARALNKYLLNVYKILQNHKINRKRRKLEKMPANFLLTKWASRYKRVESFKEKWGMNAVILAESSLFKGLAKFLGMDFIKIESFEEGIDLIPELDYDFIHLHTKETDEAAHTKNPLNKVKVIEKIDKLIGNLKLREDDLLIITADHSTPSVGNLIHSGESVPILFYGKNVRVDNVKEFNEISCSNGHLRIRGEELMHLILNYTDRALLYGLRSGDRLRYYIPKDDEIDLLEG.

This sequence belongs to the BPG-independent phosphoglycerate mutase family. A-PGAM subfamily.

The catalysed reaction is (2R)-2-phosphoglycerate = (2R)-3-phosphoglycerate. The protein operates within carbohydrate degradation; glycolysis; pyruvate from D-glyceraldehyde 3-phosphate: step 3/5. Its function is as follows. Catalyzes the interconversion of 2-phosphoglycerate and 3-phosphoglycerate. The polypeptide is 2,3-bisphosphoglycerate-independent phosphoglycerate mutase 2 (apgM2) (Methanocaldococcus jannaschii (strain ATCC 43067 / DSM 2661 / JAL-1 / JCM 10045 / NBRC 100440) (Methanococcus jannaschii)).